The sequence spans 434 residues: Glucose-6-phosphate 1-dehydrogenase (434 aa).

NADP(+) is bound by residues 7–14 (GSSGDLAK), R36, Y93, and K112. D-glucose 6-phosphate is bound by residues K112, 137-141 (HYLLK), E175, and D193. H198 acts as the Proton acceptor in catalysis. K280 and K285 together coordinate D-glucose 6-phosphate. Residue R286 coordinates NADP(+).

The protein belongs to the glucose-6-phosphate dehydrogenase family.

It carries out the reaction D-glucose 6-phosphate + NADP(+) = 6-phospho-D-glucono-1,5-lactone + NADPH + H(+). It functions in the pathway carbohydrate degradation; pentose phosphate pathway; D-ribulose 5-phosphate from D-glucose 6-phosphate (oxidative stage): step 1/3. Its function is as follows. Catalyzes the rate-limiting step of the oxidative pentose-phosphate pathway, which represents a route for the dissimilation of carbohydrates besides glycolysis. The main function of this enzyme is to provide reducing power (NADPH) and pentose phosphates for fatty acid and nucleic acid synthesis. The protein is Glucose-6-phosphate 1-dehydrogenase (ZWF1) of Encephalitozoon cuniculi (strain GB-M1) (Microsporidian parasite).